A 172-amino-acid polypeptide reads, in one-letter code: Putative phosphoesterase BCAH820_1309 (172 aa).

Catalysis depends on His34, which acts as the Proton donor. Short sequence motifs (HXTX) lie at residues 34–37 and 115–118; these read HITL and HLTI. Catalysis depends on His115, which acts as the Proton acceptor.

Belongs to the 2H phosphoesterase superfamily. YjcG family.

The polypeptide is Putative phosphoesterase BCAH820_1309 (Bacillus cereus (strain AH820)).